We begin with the raw amino-acid sequence, 449 residues long: 4-aminobutyrate aminotransferase (449 aa).

Lys-294 carries the N6-(pyridoxal phosphate)lysine modification.

This sequence belongs to the class-III pyridoxal-phosphate-dependent aminotransferase family. The cofactor is pyridoxal 5'-phosphate.

The catalysed reaction is 4-aminobutanoate + 2-oxoglutarate = succinate semialdehyde + L-glutamate. It carries out the reaction (S)-3-amino-2-methylpropanoate + 2-oxoglutarate = 2-methyl-3-oxopropanoate + L-glutamate. Its pathway is amino-acid degradation; 4-aminobutanoate degradation. The chain is 4-aminobutyrate aminotransferase (gabT) from Mycobacterium bovis (strain ATCC BAA-935 / AF2122/97).